A 268-amino-acid chain; its full sequence is Secreted RxLR effector protein 32 (268 aa).

A signal peptide spans 1–21; the sequence is MRGAYYVAFALLVAASTRTAA. Positions 50–71 match the RxLR-dEER motif; the sequence is RILRESPDPKDRLPVYASDEER. Residues 120-257 form a disordered region; it reads PKLEIKKSKR…PTPESLGIGG (138 aa). Residues 148–161 show a composition bias toward low complexity; sequence SNSKKSLVSSASAK. The span at 212–224 shows a compositional bias: basic and acidic residues; sequence NLDKNKRPDEAKI.

It belongs to the RxLR effector family.

The protein resides in the secreted. The protein localises to the host cell. Its function is as follows. Secreted effector that completely suppresses the host cell death induced by cell death-inducing proteins. The protein is Secreted RxLR effector protein 32 of Plasmopara viticola (Downy mildew of grapevine).